We begin with the raw amino-acid sequence, 208 residues long: Large ribosomal subunit protein uL3 (208 aa).

The segment at 123 to 147 (RHGQSRGPMAHGSRYHRRPGSMGPV) is disordered.

It belongs to the universal ribosomal protein uL3 family. In terms of assembly, part of the 50S ribosomal subunit. Forms a cluster with proteins L14 and L19.

Functionally, one of the primary rRNA binding proteins, it binds directly near the 3'-end of the 23S rRNA, where it nucleates assembly of the 50S subunit. This Streptococcus sanguinis (strain SK36) protein is Large ribosomal subunit protein uL3.